The sequence spans 248 residues: PF03932 family protein CutC (248 aa).

It belongs to the CutC family. As to quaternary structure, homodimer.

Its subcellular location is the cytoplasm. The chain is PF03932 family protein CutC from Shigella boydii serotype 4 (strain Sb227).